The primary structure comprises 458 residues: Retinoic acid receptor gamma (458 aa).

The modulating stretch occupies residues 1 to 89 (MATNKERLFA…PPPPPRVYKP (89 aa)). Arginine 34 is modified (omega-N-methylarginine). The disordered stretch occupies residues 58–83 (MASLSVETQSTSSEEMVPSSPSPPPP). Residues 62–71 (SVETQSTSSE) show a composition bias toward polar residues. 2 consecutive NR C4-type zinc fingers follow at residues 90-110 (CFVC…CEGC) and 126-150 (CHRD…LQKC). Residues 90 to 155 (CFVCNDKSSG…RLQKCFEVGM (66 aa)) constitute a DNA-binding region (nuclear receptor). A hinge region spans residues 156-184 (SKEAVRNDRNKKKKEVKEEGSPDSYELSP). The segment at 161-180 (RNDRNKKKKEVKEEGSPDSY) is disordered. Glycyl lysine isopeptide (Lys-Gly) (interchain with G-Cter in SUMO2) cross-links involve residues lysine 172 and lysine 401. The 235-residue stretch at 185-419 (QLEELITKVS…PLIREMLENP (235 aa)) folds into the NR LBD domain. Residues 409–458 (PPLIREMLENPEMFEDDSSKPGPHPKASSEDEAPGGQGKRGQSPQPDQGP) are disordered. Residues 448–458 (RGQSPQPDQGP) are compositionally biased toward polar residues.

It belongs to the nuclear hormone receptor family. NR1 subfamily. In terms of assembly, homodimer. Heterodimer with a RXR molecule. Binds DNA preferentially as a RAR/RXR heterodimer. Forms a complex with PUS1 and the SRA1 RNA in the nucleus.

The protein localises to the nucleus. It is found in the cytoplasm. In terms of biological role, receptor for retinoic acid. Retinoic acid receptors bind as heterodimers to their target response elements in response to their ligands, all-trans or 9-cis retinoic acid, and regulate gene expression in various biological processes. The RAR/RXR heterodimers bind to the retinoic acid response elements (RARE) composed of tandem 5'-AGGTCA-3' sites known as DR1-DR5. In the absence of ligand, acts mainly as an activator of gene expression due to weak binding to corepressors. Required for limb bud development. In concert with RARA or RARB, required for skeletal growth, matrix homeostasis and growth plate function. In Mus musculus (Mouse), this protein is Retinoic acid receptor gamma (Rarg).